The sequence spans 668 residues: Tastin (668 aa).

3 disordered regions span residues 1–102 (MTTL…GGSN), 154–177 (ERKG…PRIP), and 189–285 (FSRL…GRHH). Ser-16 is subject to Phosphoserine. Composition is skewed to polar residues over residues 27–37 (QRCQDFSSVKS) and 55–64 (PRSTQRQRPL). Ser-97 is modified (phosphoserine). Residues 158 to 168 (GTTQRGQSARS) show a composition bias toward polar residues. The residue at position 169 (Ser-169) is a Phosphoserine. Composition is skewed to basic and acidic residues over residues 227–246 (ELRR…DRRT) and 269–282 (GEQE…DGGG). Residues Ser-306, Ser-324, and Ser-338 each carry the phosphoserine modification. Disordered regions lie at residues 364 to 392 (ITLQ…HQEL) and 462 to 502 (TEPL…AEPE).

Directly binds bystin, and indirectly trophinin.

Its subcellular location is the cytoplasm. In terms of biological role, could be involved with bystin and trophinin in a cell adhesion molecule complex that mediates an initial attachment of the blastocyst to uterine epithelial cells at the time of the embryo implantation. In Mus musculus (Mouse), this protein is Tastin.